A 323-amino-acid chain; its full sequence is tRNA U34 carboxymethyltransferase (323 aa).

Carboxy-S-adenosyl-L-methionine contacts are provided by residues Lys91, Trp105, Lys110, Gly130, 180–181, Met196, Tyr200, and Arg315; that span reads IE.

Belongs to the class I-like SAM-binding methyltransferase superfamily. CmoB family. Homotetramer.

The enzyme catalyses carboxy-S-adenosyl-L-methionine + 5-hydroxyuridine(34) in tRNA = 5-carboxymethoxyuridine(34) in tRNA + S-adenosyl-L-homocysteine + H(+). Its function is as follows. Catalyzes carboxymethyl transfer from carboxy-S-adenosyl-L-methionine (Cx-SAM) to 5-hydroxyuridine (ho5U) to form 5-carboxymethoxyuridine (cmo5U) at position 34 in tRNAs. The chain is tRNA U34 carboxymethyltransferase from Citrifermentans bemidjiense (strain ATCC BAA-1014 / DSM 16622 / JCM 12645 / Bem) (Geobacter bemidjiensis).